The sequence spans 421 residues: uncharacterized protein (421 aa).

CBS domains are found at residues 13-74 (MTKD…VRSL), 74-133 (LMYK…MKDT), 139-195 (MTRN…PKKK), and 217-274 (MNTP…KGAM).

This is an uncharacterized protein from Methanocaldococcus jannaschii (strain ATCC 43067 / DSM 2661 / JAL-1 / JCM 10045 / NBRC 100440) (Methanococcus jannaschii).